Consider the following 306-residue polypeptide: Glutathione transport system permease protein GsiC (306 aa).

Over M1–R8 the chain is Cytoplasmic. The chain crosses the membrane as a helical span at residues L9–L29. At L30–T102 the chain is on the periplasmic side. Positions F95–V292 constitute an ABC transmembrane type-1 domain. The chain crosses the membrane as a helical span at residues I103 to W123. The Cytoplasmic segment spans residues R124–T134. A helical membrane pass occupies residues L135 to F155. The Periplasmic segment spans residues S156–D168. Residues S169–A189 form a helical membrane-spanning segment. The Cytoplasmic portion of the chain corresponds to R190–M228. Residues I229 to V249 traverse the membrane as a helical segment. The Periplasmic portion of the chain corresponds to E250–V278. Residues L279–I299 traverse the membrane as a helical segment. Residues N300–K306 lie on the Cytoplasmic side of the membrane.

The protein belongs to the binding-protein-dependent transport system permease family. The complex is composed of two ATP-binding proteins (GsiA), two transmembrane proteins (GsiC and GsiD) and a solute-binding protein (GsiB).

It is found in the cell inner membrane. Part of the ABC transporter complex GsiABCD involved in glutathione import. Probably responsible for the translocation of the substrate across the membrane. This is Glutathione transport system permease protein GsiC from Salmonella choleraesuis (strain SC-B67).